The primary structure comprises 125 residues: Large ribosomal subunit protein bL12 (125 aa).

It belongs to the bacterial ribosomal protein bL12 family. As to quaternary structure, homodimer. Part of the ribosomal stalk of the 50S ribosomal subunit. Forms a multimeric L10(L12)X complex, where L10 forms an elongated spine to which 2 to 4 L12 dimers bind in a sequential fashion. Binds GTP-bound translation factors.

Forms part of the ribosomal stalk which helps the ribosome interact with GTP-bound translation factors. Is thus essential for accurate translation. This Chlorobium phaeobacteroides (strain DSM 266 / SMG 266 / 2430) protein is Large ribosomal subunit protein bL12.